The sequence spans 375 residues: 23S rRNA (uracil(747)-C(5))-methyltransferase RlmC (375 aa).

Cysteine 3, cysteine 11, cysteine 14, and cysteine 87 together coordinate [4Fe-4S] cluster. The S-adenosyl-L-methionine site is built by glutamine 212, phenylalanine 241, glutamate 262, and asparagine 307. Catalysis depends on cysteine 334, which acts as the Nucleophile.

The protein belongs to the class I-like SAM-binding methyltransferase superfamily. RNA M5U methyltransferase family. RlmC subfamily.

The catalysed reaction is uridine(747) in 23S rRNA + S-adenosyl-L-methionine = 5-methyluridine(747) in 23S rRNA + S-adenosyl-L-homocysteine + H(+). Catalyzes the formation of 5-methyl-uridine at position 747 (m5U747) in 23S rRNA. This is 23S rRNA (uracil(747)-C(5))-methyltransferase RlmC from Escherichia coli O6:H1 (strain CFT073 / ATCC 700928 / UPEC).